A 227-amino-acid chain; its full sequence is Germin-like protein subfamily 1 member 6 (227 aa).

Positions 1–25 (MMEVLLRLLVTQVILLALATSFVSC) are cleaved as a signal peptide. C35 and C51 are oxidised to a cystine. The region spanning 65-216 (SGLNIARNTT…AFQLDVKLVR (152 aa)) is the Cupin type-1 domain. N-linked (GlcNAc...) asparagine glycans are attached at residues N72 and N80. Mn(2+)-binding residues include H113, H115, E120, and H162.

This sequence belongs to the germin family. As to quaternary structure, oligomer (believed to be a pentamer but probably hexamer).

It is found in the secreted. It localises to the extracellular space. The protein resides in the apoplast. Its function is as follows. May play a role in plant defense. Probably has no oxalate oxidase activity even if the active site is conserved. The sequence is that of Germin-like protein subfamily 1 member 6 from Arabidopsis thaliana (Mouse-ear cress).